We begin with the raw amino-acid sequence, 505 residues long: Trans-cinnamate 4-monooxygenase (505 aa).

A helical transmembrane segment spans residues 3–23; it reads LLLLEKTLLGLFAAIIVASIV. Residues 213–218 and alanine 306 contribute to the (E)-cinnamate site; that span reads RSRLAQ. Residue cysteine 447 participates in heme binding.

This sequence belongs to the cytochrome P450 family. Heme is required as a cofactor.

The protein resides in the membrane. The catalysed reaction is (E)-cinnamate + reduced [NADPH--hemoprotein reductase] + O2 = (E)-4-coumarate + oxidized [NADPH--hemoprotein reductase] + H2O + H(+). It functions in the pathway phenylpropanoid metabolism; trans-4-coumarate biosynthesis; trans-4-coumarate from trans-cinnamate: step 1/1. Catalyzes the first oxidative step of the phenylpropanoid pathway in higher plants by transforming trans-cinnamate into p-coumarate. The compounds formed by this pathway are essential components for lignification, pollination, and defense against ultraviolet light, predators and pathogens. The polypeptide is Trans-cinnamate 4-monooxygenase (CYP73A4) (Catharanthus roseus (Madagascar periwinkle)).